Reading from the N-terminus, the 432-residue chain is MSKIVKIIGREIIDSRGNPTVEAEVHLEGGFVGMAAAPSGASTGSREALELRDGDKSRFLGKGVTKAVAAVNGPIAQALIGKDAKDQAGIDKIMIDLDGTENKSKFGANAILAVSLANAKAAAAAKGMPLYEHIAELNGTPGKYSMPVPMMNIINGGEHADNNVDIQEFMIQPVGAKTVKEAIRMGSEVFHHLAKVLKAKGMNTAVGDEGGYAPNLGSNAEALAVIAEAVKAAGYELGKDITLAMDCAASEFYKDGKYVLAGEGNKAFTSEEFTHFLEELTKQYPIVSIEDGLDESDWDGFAYQTKVLGDKIQLVGDDLFVTNTKILKEGIEKGIANSILIKFNQIGSLTETLAAIKMAKDAGYTAVISHRSGETEDATIADLAVGTAAGQIKTGSMSRSDRVAKYNQLIRIEEALGEKAPYNGRKEIKGQA.

A (2R)-2-phosphoglycerate-binding site is contributed by glutamine 167. Glutamate 209 (proton donor) is an active-site residue. Positions 246, 290, and 317 each coordinate Mg(2+). (2R)-2-phosphoglycerate is bound by residues lysine 342, arginine 371, serine 372, and lysine 393. Catalysis depends on lysine 342, which acts as the Proton acceptor.

This sequence belongs to the enolase family. Component of the RNA degradosome, a multiprotein complex involved in RNA processing and mRNA degradation. Requires Mg(2+) as cofactor.

It localises to the cytoplasm. The protein resides in the secreted. It is found in the cell surface. It carries out the reaction (2R)-2-phosphoglycerate = phosphoenolpyruvate + H2O. It participates in carbohydrate degradation; glycolysis; pyruvate from D-glyceraldehyde 3-phosphate: step 4/5. In terms of biological role, catalyzes the reversible conversion of 2-phosphoglycerate (2-PG) into phosphoenolpyruvate (PEP). It is essential for the degradation of carbohydrates via glycolysis. The protein is Enolase of Escherichia coli O139:H28 (strain E24377A / ETEC).